We begin with the raw amino-acid sequence, 642 residues long: Threonine--tRNA ligase (642 aa).

The 61-residue stretch at 1–61 (MPVITITNGL…MQDSKLDIIT (61 aa)) folds into the TGS domain. The interval 243–534 (DHRKIGQQLD…LIEEYAGFFP (292 aa)) is catalytic. Residues Cys334, His385, and His511 each coordinate Zn(2+).

It belongs to the class-II aminoacyl-tRNA synthetase family. In terms of assembly, homodimer. It depends on Zn(2+) as a cofactor.

It is found in the cytoplasm. The enzyme catalyses tRNA(Thr) + L-threonine + ATP = L-threonyl-tRNA(Thr) + AMP + diphosphate + H(+). Catalyzes the attachment of threonine to tRNA(Thr) in a two-step reaction: L-threonine is first activated by ATP to form Thr-AMP and then transferred to the acceptor end of tRNA(Thr). Also edits incorrectly charged L-seryl-tRNA(Thr). The sequence is that of Threonine--tRNA ligase from Baumannia cicadellinicola subsp. Homalodisca coagulata.